A 740-amino-acid polypeptide reads, in one-letter code: Ion-translocating oxidoreductase complex subunit C (740 aa).

4Fe-4S ferredoxin-type domains follow at residues 369-397 and 407-436; these read GEPQEEQSCIRCSACADACPADLLPQQLY and KATTHNIADCIECGACAWVCPSNIPLVQYF. 8 residues coordinate [4Fe-4S] cluster: cysteine 377, cysteine 380, cysteine 383, cysteine 387, cysteine 416, cysteine 419, cysteine 422, and cysteine 426. The tract at residues 602–714 is disordered; sequence KLEQQQANAE…NAEPEEQIDP (113 aa). Residues 605-615 are compositionally biased toward low complexity; that stretch reads QQQANAEPEQQ.

It belongs to the 4Fe4S bacterial-type ferredoxin family. RnfC subfamily. As to quaternary structure, the complex is composed of six subunits: RsxA, RsxB, RsxC, RsxD, RsxE and RsxG. [4Fe-4S] cluster is required as a cofactor.

It is found in the cell inner membrane. Part of a membrane-bound complex that couples electron transfer with translocation of ions across the membrane. Required to maintain the reduced state of SoxR. The polypeptide is Ion-translocating oxidoreductase complex subunit C (Escherichia coli O17:K52:H18 (strain UMN026 / ExPEC)).